The following is a 443-amino-acid chain: Thymidine phosphorylase (443 aa).

This sequence belongs to the thymidine/pyrimidine-nucleoside phosphorylase family. Homodimer.

The catalysed reaction is thymidine + phosphate = 2-deoxy-alpha-D-ribose 1-phosphate + thymine. It functions in the pathway pyrimidine metabolism; dTMP biosynthesis via salvage pathway; dTMP from thymine: step 1/2. Its function is as follows. The enzymes which catalyze the reversible phosphorolysis of pyrimidine nucleosides are involved in the degradation of these compounds and in their utilization as carbon and energy sources, or in the rescue of pyrimidine bases for nucleotide synthesis. This Shewanella woodyi (strain ATCC 51908 / MS32) protein is Thymidine phosphorylase.